A 396-amino-acid chain; its full sequence is S-adenosylmethionine synthase (396 aa).

An ATP-binding site is contributed by histidine 16. A Mg(2+)-binding site is contributed by aspartate 18. Glutamate 44 is a binding site for K(+). Glutamate 57 and glutamine 100 together coordinate L-methionine. The flexible loop stretch occupies residues 100 to 110 (QSPDINQGVDR). ATP contacts are provided by residues 165–167 (DAK), aspartate 240, 246–247 (RK), alanine 263, and lysine 267. Residue aspartate 240 participates in L-methionine binding. Lysine 271 lines the L-methionine pocket.

This sequence belongs to the AdoMet synthase family. As to quaternary structure, homotetramer; dimer of dimers. Mg(2+) serves as cofactor. It depends on K(+) as a cofactor.

It is found in the cytoplasm. It carries out the reaction L-methionine + ATP + H2O = S-adenosyl-L-methionine + phosphate + diphosphate. Its pathway is amino-acid biosynthesis; S-adenosyl-L-methionine biosynthesis; S-adenosyl-L-methionine from L-methionine: step 1/1. Functionally, catalyzes the formation of S-adenosylmethionine (AdoMet) from methionine and ATP. The overall synthetic reaction is composed of two sequential steps, AdoMet formation and the subsequent tripolyphosphate hydrolysis which occurs prior to release of AdoMet from the enzyme. This Pseudomonas fluorescens (strain SBW25) protein is S-adenosylmethionine synthase.